Here is a 110-residue protein sequence, read N- to C-terminus: UPF0339 protein SO_3888 (110 aa).

Repeat copies occupy residues 10–58 and 61–109.

This sequence belongs to the UPF0339 family. Duplicated subfamily.

The polypeptide is UPF0339 protein SO_3888 (Shewanella oneidensis (strain ATCC 700550 / JCM 31522 / CIP 106686 / LMG 19005 / NCIMB 14063 / MR-1)).